Consider the following 615-residue polypeptide: 1-deoxy-D-xylulose-5-phosphate synthase (615 aa).

Residues His76 and Gly117–Ser119 each bind thiamine diphosphate. Asp148 is a binding site for Mg(2+). Thiamine diphosphate is bound by residues Gly149–Ala150, Asn177, Tyr284, and Glu365. Asn177 contributes to the Mg(2+) binding site.

This sequence belongs to the transketolase family. DXPS subfamily. Homodimer. The cofactor is Mg(2+). Thiamine diphosphate serves as cofactor.

The catalysed reaction is D-glyceraldehyde 3-phosphate + pyruvate + H(+) = 1-deoxy-D-xylulose 5-phosphate + CO2. Its pathway is metabolic intermediate biosynthesis; 1-deoxy-D-xylulose 5-phosphate biosynthesis; 1-deoxy-D-xylulose 5-phosphate from D-glyceraldehyde 3-phosphate and pyruvate: step 1/1. Functionally, catalyzes the acyloin condensation reaction between C atoms 2 and 3 of pyruvate and glyceraldehyde 3-phosphate to yield 1-deoxy-D-xylulose-5-phosphate (DXP). This chain is 1-deoxy-D-xylulose-5-phosphate synthase, found in Francisella tularensis subsp. tularensis (strain FSC 198).